We begin with the raw amino-acid sequence, 433 residues long: Probable mannan endo-1,4-beta-mannosidase F (433 aa).

A signal peptide spans 1 to 19 (MKRQALTLIPLLGAAAAQS). The CBM1 domain maps to 20 to 53 (GPYGQCGGNDWSGATTCVSGYVCVYQNEWYSQCV). Positions 56-82 (TATSSSTTLTTTTSATTRTTTTTTSTT) are thr-rich linker. The tract at residues 83–433 (SVPSSTNFPS…TEHMERIAAR (351 aa)) is catalytic. A glycan (N-linked (GlcNAc...) asparagine) is linked at Asn97. 2 residues coordinate substrate: Trp142 and Asn255. The active-site Proton donor is Glu256. Residue Tyr331 participates in substrate binding. Glu364 (nucleophile) is an active-site residue. Residue Trp394 participates in substrate binding.

This sequence belongs to the glycosyl hydrolase 5 (cellulase A) family.

The protein localises to the secreted. The catalysed reaction is Random hydrolysis of (1-&gt;4)-beta-D-mannosidic linkages in mannans, galactomannans and glucomannans.. Endo-1,4-mannanase, a crucial enzyme for depolymerization of seed galactomannans and wood galactoglucomannans. The chain is Probable mannan endo-1,4-beta-mannosidase F (manF) from Emericella nidulans (strain FGSC A4 / ATCC 38163 / CBS 112.46 / NRRL 194 / M139) (Aspergillus nidulans).